The primary structure comprises 662 residues: UvrABC system protein B (662 aa).

Residues 25-412 form the Helicase ATP-binding domain; the sequence is EGIEKGLKMQ…SQKIVEQIIR (388 aa). Residue 38–45 coordinates ATP; that stretch reads GVTGSGKT. The short motif at 91–114 is the Beta-hairpin element; it reads YYDYYQPEAYLPATDTYIEKDSAI. The Helicase C-terminal domain maps to 429-595; that stretch reads QVDDLYGEIK…TVQKAVRDVI (167 aa). Residues 622-657 enclose the UVR domain; sequence KQYVEKLTREMKEAAKALEFEKAAMLRDLIIELRAQ.

It belongs to the UvrB family. Forms a heterotetramer with UvrA during the search for lesions. Interacts with UvrC in an incision complex.

The protein resides in the cytoplasm. The UvrABC repair system catalyzes the recognition and processing of DNA lesions. A damage recognition complex composed of 2 UvrA and 2 UvrB subunits scans DNA for abnormalities. Upon binding of the UvrA(2)B(2) complex to a putative damaged site, the DNA wraps around one UvrB monomer. DNA wrap is dependent on ATP binding by UvrB and probably causes local melting of the DNA helix, facilitating insertion of UvrB beta-hairpin between the DNA strands. Then UvrB probes one DNA strand for the presence of a lesion. If a lesion is found the UvrA subunits dissociate and the UvrB-DNA preincision complex is formed. This complex is subsequently bound by UvrC and the second UvrB is released. If no lesion is found, the DNA wraps around the other UvrB subunit that will check the other stand for damage. This is UvrABC system protein B from Carboxydothermus hydrogenoformans (strain ATCC BAA-161 / DSM 6008 / Z-2901).